Consider the following 182-residue polypeptide: Putative manganese efflux pump MntP 2 (182 aa).

6 helical membrane passes run 2–22 (IELT…SIAL), 37–57 (AGGF…YLGV), 63–83 (IGGI…LKMI), 104–123 (LLLL…LTLT), 127–149 (LPLW…GGVH), and 162–182 (AEYL…IEHS).

This sequence belongs to the MntP (TC 9.B.29) family.

It localises to the cell inner membrane. Probably functions as a manganese efflux pump. In Wolinella succinogenes (strain ATCC 29543 / DSM 1740 / CCUG 13145 / JCM 31913 / LMG 7466 / NCTC 11488 / FDC 602W) (Vibrio succinogenes), this protein is Putative manganese efflux pump MntP 2.